Reading from the N-terminus, the 448-residue chain is Phosphoglucosamine mutase (448 aa).

The Phosphoserine intermediate role is filled by serine 100. Positions 100, 240, 242, and 244 each coordinate Mg(2+). Phosphoserine is present on serine 100.

This sequence belongs to the phosphohexose mutase family. The cofactor is Mg(2+). Post-translationally, activated by phosphorylation.

It catalyses the reaction alpha-D-glucosamine 1-phosphate = D-glucosamine 6-phosphate. Functionally, catalyzes the conversion of glucosamine-6-phosphate to glucosamine-1-phosphate. This is Phosphoglucosamine mutase from Clostridium tetani (strain Massachusetts / E88).